Consider the following 497-residue polypeptide: MDAMKYNDLRDFLTLLEQQGELKRITLPVDPHLEITEIADRTLRAGGPALLFENPKGYSMPVLCNLFGTPKRVAMGMGQEDVSALREVGKLLAFLKEPEPPKGFRDLFDKLPQFKQVLNMPTKRLRGAPCQQKIVSGDDVDLNRIPIMTCWPEDAAPLITWGLTVTRGPHKERQNLGIYRQQLIGKNKLIMRWLSHRGGALDYQEWCAAHPGERFPISVALGADPATILGAVTPVPDTLSEYAFAGLLRGTKTEVVKCISNDLEVPASAEIVLEGYIEQGEMAPEGPYGDHTGYYNEVDSFPVFTVTHITQREDAIYHSTYTGRPPDEPAVLGVALNEVFVPILQKQFPEIVDFYLPPEGCSYRLAVVTIKKQYAGHAKRVMMGVWSFLRQFMYTKFVIVCDDDVNARDWNDVIWAITTRMDPARDTVLVENTPIDYLDFASPVSGLGSKMGLDATNKWPGETQREWGRPIKKDPDVVAHIDAIWDELAIFNNGKSA.

Residue Asn-175 coordinates Mn(2+). Prenylated FMN contacts are provided by residues 178–180 (IYR), 192–194 (RWL), and 197–198 (RG). A Mn(2+)-binding site is contributed by Glu-241. Asp-290 (proton donor) is an active-site residue.

It belongs to the UbiD family. Homohexamer. The cofactor is prenylated FMN. It depends on Mn(2+) as a cofactor.

It is found in the cell membrane. It carries out the reaction a 4-hydroxy-3-(all-trans-polyprenyl)benzoate + H(+) = a 2-(all-trans-polyprenyl)phenol + CO2. The protein operates within cofactor biosynthesis; ubiquinone biosynthesis. Its function is as follows. Catalyzes the decarboxylation of 3-octaprenyl-4-hydroxy benzoate to 2-octaprenylphenol, an intermediate step in ubiquinone biosynthesis. This is 3-octaprenyl-4-hydroxybenzoate carboxy-lyase from Escherichia coli O157:H7.